Reading from the N-terminus, the 37-residue chain is MIEPLLCGIVLGLIPITLAGLFMAAYLQYRRGNQLGA.

The chain crosses the membrane as a helical span at residues 5 to 25 (LLCGIVLGLIPITLAGLFMAA).

The protein belongs to the PetG family. In terms of assembly, the 4 large subunits of the cytochrome b6-f complex are cytochrome b6, subunit IV (17 kDa polypeptide, PetD), cytochrome f and the Rieske protein, while the 4 small subunits are PetG, PetL, PetM and PetN. The complex functions as a dimer.

The protein localises to the cellular thylakoid membrane. In terms of biological role, component of the cytochrome b6-f complex, which mediates electron transfer between photosystem II (PSII) and photosystem I (PSI), cyclic electron flow around PSI, and state transitions. PetG is required for either the stability or assembly of the cytochrome b6-f complex. The chain is Cytochrome b6-f complex subunit 5 from Synechococcus elongatus (strain ATCC 33912 / PCC 7942 / FACHB-805) (Anacystis nidulans R2).